Reading from the N-terminus, the 255-residue chain is Triosephosphate isomerase (255 aa).

Residue 9–11 (NWK) participates in substrate binding. Histidine 96 serves as the catalytic Electrophile. The Proton acceptor role is filled by glutamate 170. Substrate is bound by residues glycine 176, serine 216, and 237-238 (GG).

This sequence belongs to the triosephosphate isomerase family. In terms of assembly, homodimer.

The protein resides in the cytoplasm. It catalyses the reaction D-glyceraldehyde 3-phosphate = dihydroxyacetone phosphate. It participates in carbohydrate biosynthesis; gluconeogenesis. The protein operates within carbohydrate degradation; glycolysis; D-glyceraldehyde 3-phosphate from glycerone phosphate: step 1/1. Functionally, involved in the gluconeogenesis. Catalyzes stereospecifically the conversion of dihydroxyacetone phosphate (DHAP) to D-glyceraldehyde-3-phosphate (G3P). This Magnetococcus marinus (strain ATCC BAA-1437 / JCM 17883 / MC-1) protein is Triosephosphate isomerase.